The following is a 388-amino-acid chain: Processive diacylglycerol beta-glucosyltransferase (388 aa).

It belongs to the glycosyltransferase 28 family. UgtP subfamily.

It localises to the cell membrane. It catalyses the reaction a 1,2-diacyl-3-O-(beta-D-glucopyranosyl)-sn-glycerol + UDP-alpha-D-glucose = a 1,2-diacyl-3-O-(beta-D-Glc-(1-&gt;6)-beta-D-Glc)-sn-glycerol + UDP + H(+). The enzyme catalyses a 1,2-diacyl-3-O-(beta-D-Glc-(1-&gt;6)-beta-D-Glc)-sn-glycerol + UDP-alpha-D-glucose = a 1,2-diacyl-3-O-(beta-D-Glc-(1-&gt;6)-beta-D-Glc-(1-&gt;6)-beta-D-Glc)-sn-glycerol + UDP + H(+). It carries out the reaction a 1,2-diacyl-sn-glycerol + UDP-alpha-D-glucose = a 1,2-diacyl-3-O-(beta-D-glucopyranosyl)-sn-glycerol + UDP + H(+). It participates in glycolipid metabolism; diglucosyl-diacylglycerol biosynthesis. In terms of biological role, processive glucosyltransferase involved in the biosynthesis of both the bilayer- and non-bilayer-forming membrane glucolipids. Is able to successively transfer up to three glucosyl residues to diacylglycerol (DAG), thereby catalyzing the formation of beta-monoglucosyl-DAG (3-O-(beta-D-glucopyranosyl)-1,2-diacyl-sn-glycerol), beta-diglucosyl-DAG (3-O-(beta-D-glucopyranosyl-beta-(1-&gt;6)-D-glucopyranosyl)-1,2-diacyl-sn-glycerol) and beta-triglucosyl-DAG (3-O-(beta-D-glucopyranosyl-beta-(1-&gt;6)-D-glucopyranosyl-beta-(1-&gt;6)-D-glucopyranosyl)-1,2-diacyl-sn-glycerol). Beta-diglucosyl-DAG is the predominant glycolipid found in Bacillales and is also used as a membrane anchor for lipoteichoic acid (LTA). The chain is Processive diacylglycerol beta-glucosyltransferase from Bacillus thuringiensis (strain Al Hakam).